Here is a 206-residue protein sequence, read N- to C-terminus: Large ribosomal subunit protein uL3 (206 aa).

The interval 127 to 151 (SGGPSSHGSKFHRHLGGTGQATTPA) is disordered.

This sequence belongs to the universal ribosomal protein uL3 family. Part of the 50S ribosomal subunit. Forms a cluster with proteins L14 and L19.

Functionally, one of the primary rRNA binding proteins, it binds directly near the 3'-end of the 23S rRNA, where it nucleates assembly of the 50S subunit. This chain is Large ribosomal subunit protein uL3, found in Borrelia garinii subsp. bavariensis (strain ATCC BAA-2496 / DSM 23469 / PBi) (Borreliella bavariensis).